We begin with the raw amino-acid sequence, 350 residues long: Palmitoyltransferase erf2 (350 aa).

The Cytoplasmic segment spans residues 1 to 86 (MSYEKHSDAK…RLQMSSQYKA (86 aa)). The chain crosses the membrane as a helical span at residues 87-107 (FLISLFALILPGVLFFIFSAF). The Lumenal segment spans residues 108 to 112 (WLWHH). A helical transmembrane segment spans residues 113–133 (VSPAVPITFAYLYALAVVSMF). The Cytoplasmic segment spans residues 134–225 (KCSTADPGIL…NTCIGRRNYR (92 aa)). One can recognise a DHHC domain in the interval 182 to 232 (VYCHTCHLYRPPRASHCHLCDNCVEYLDHHCIWLNTCIGRRNYRYYFIFLL). C212 functions as the S-palmitoyl cysteine intermediate in the catalytic mechanism. Residues 226–246 (YYFIFLLSVVLSALYLTGLGF) form a helical membrane-spanning segment. The Lumenal segment spans residues 247-270 (YTSIGSFHESTDTNFAAHLRRPWA). A helical transmembrane segment spans residues 271 to 291 (GVSFFLGIYGALGAILPGILF). The Cytoplasmic portion of the chain corresponds to 292–350 (CYQCYLISVGQNVHEYLRAKSTETEDVHPFHDSIWLNFLVVLCRPKNVSYVRPTRKSYV).

Belongs to the DHHC palmitoyltransferase family. ERF2/ZDHHC9 subfamily. Interacts with erf4. Autopalmitoylated.

The protein localises to the endoplasmic reticulum membrane. It localises to the golgi apparatus. Its subcellular location is the golgi stack membrane. It carries out the reaction L-cysteinyl-[protein] + hexadecanoyl-CoA = S-hexadecanoyl-L-cysteinyl-[protein] + CoA. In terms of biological role, the erf2-erf4 complex is a palmitoyltransferase with a major role in driving sexual development. Palmitoylates ras1. Palmitoylates isp3. Palmitoylates rho3. In Schizosaccharomyces pombe (strain 972 / ATCC 24843) (Fission yeast), this protein is Palmitoyltransferase erf2.